Reading from the N-terminus, the 339-residue chain is NADH-quinone oxidoreductase subunit H (339 aa).

9 helical membrane passes run 9–29 (IFPL…LILC), 50–70 (PNVV…KLLF), 82–102 (ILFI…WAVI), 115–135 (VGVL…IIAG), 161–181 (MGLV…SEII), 187–207 (IPWW…ISVL), 235–255 (MGFA…SAMT), 275–295 (IPGF…FLWI), and 311–331 (GWKV…SVLV).

It belongs to the complex I subunit 1 family. As to quaternary structure, NDH-1 is composed of 14 different subunits. Subunits NuoA, H, J, K, L, M, N constitute the membrane sector of the complex.

The protein localises to the cell inner membrane. The enzyme catalyses a quinone + NADH + 5 H(+)(in) = a quinol + NAD(+) + 4 H(+)(out). In terms of biological role, NDH-1 shuttles electrons from NADH, via FMN and iron-sulfur (Fe-S) centers, to quinones in the respiratory chain. The immediate electron acceptor for the enzyme in this species is believed to be ubiquinone. Couples the redox reaction to proton translocation (for every two electrons transferred, four hydrogen ions are translocated across the cytoplasmic membrane), and thus conserves the redox energy in a proton gradient. This subunit may bind ubiquinone. The chain is NADH-quinone oxidoreductase subunit H from Rickettsia rickettsii (strain Iowa).